The primary structure comprises 452 residues: Glycine receptor subunit alpha-2 (452 aa).

The first 27 residues, Met1–Cys27, serve as a signal peptide directing secretion. The Extracellular portion of the chain corresponds to Lys28–Tyr256. Asn72 carries N-linked (GlcNAc...) asparagine glycosylation. Arg99 contributes to the glycine binding site. Residue Arg99 participates in strychnine binding. N-linked (GlcNAc...) asparagine glycosylation occurs at Asn103. Ser163 lines the glycine pocket. Cys172 and Cys186 form a disulfide bridge. Zn(2+) is bound by residues Glu226 and Glu228. An intrachain disulfide couples Cys232 to Cys243. Residue Thr238 participates in glycine binding. A Zn(2+)-binding site is contributed by His249. A helical transmembrane segment spans residues Tyr257–Ile278. The Cytoplasmic portion of the chain corresponds to Asn279–Ala283. The chain crosses the membrane as a helical span at residues Pro284–Ser304. Residues Arg305–Lys315 are Extracellular-facing. Residues Ala316–Ala336 form a helical membrane-spanning segment. At Ala337–Thr420 the chain is on the cytoplasmic side. A helical transmembrane segment spans residues Ile421–Tyr441. Residues Lys442–Lys452 are Extracellular-facing.

The protein belongs to the ligand-gated ion channel (TC 1.A.9) family. Glycine receptor (TC 1.A.9.3) subfamily. GLRA2 sub-subfamily. As to quaternary structure, interacts with GLRB. Heteropentamer composed of GLRA2 and GLRB; functional GLRB-GLRA2 heteropentamers contain four GLRA2 subunits and one GLRB subunit, although alternative subunit composition cannot be excluded. Homopentamer (in vitro). Both homopentamers and heteropentamers form functional ion channels, but their characteristics are subtly different. As to expression, detected in the retina inner plexiform layer (at protein level). Detected in neonate retina. Detected in brain. Detected in spinal cord, with higher levels in the dorsal horn.

The protein resides in the postsynaptic cell membrane. Its subcellular location is the synapse. It localises to the cell membrane. It is found in the cell projection. The catalysed reaction is chloride(in) = chloride(out). Its activity is regulated as follows. Channel opening is triggered by extracellular glycine. Channel opening is also triggered by taurine and beta-alanine. Inhibited by strychnine. Inhibited by picrotoxin. Functionally, subunit of heteromeric glycine-gated chloride channels. Plays a role in synaptic plasticity. Contributes to the generation of inhibitory postsynaptic currents, and is involved in the down-regulation of neuronal excitability. Plays a role in cellular responses to ethanol. The polypeptide is Glycine receptor subunit alpha-2 (Mus musculus (Mouse)).